The primary structure comprises 308 residues: Thiohydrolase (308 aa).

This sequence belongs to the polyketide transferase af380 family.

The protein operates within mycotoxin biosynthesis. Its function is as follows. Thiohydrolase; part of the gene cluster that mediates the biosynthesis of brefeldin A (BFA), a protein transport inhibitor that shows antiviral, antifungal, and antitumor properties. The proposed biosynthesis of BFA involves formation of an acyclic polyketide chain that is differentially tailored throughout the backbone. The highly reducing polyketide synthase Bref-PKS is proposed to synthesize the precisely reduced octaketide precursor, which could then be directly offloaded by the thiohydrolase enzyme Bref-TH followed by a cytochrome P450 monooxygenase-mediated formation of the cyclopentane ring and macrocyclization to afford 7-deoxy BFA. Alternatively, the first ring annulation can also occur on the ACP-tethered intermediate before the thiohydrolase release and lactonization. The C7-hydroxylation by another cytochrome P450 monooxygenase is believed to be the final step in the process to obtain the final structure of BFA. In addition to the HRPKS Bref-PKS and the thiohydrolase Bref-TH, the brefeldin A biosynthesis cluster contains 4 cytochrome p450 monooxygenases (called orf3 to orf6), as well a the probable cluster-specific transcription regulator orf8. The sequence is that of Thiohydrolase from Eupenicillium brefeldianum (Penicillium brefeldianum).